Here is a 557-residue protein sequence, read N- to C-terminus: Probable tRNA-splicing endonuclease subunit tsp-5 (557 aa).

Disordered stretches follow at residues 1 to 36 (MPLDDDLEDNPSLVPPPSTTTTSSNATGDAATMMDE), 131 to 152 (KLTKRGKEGAGEDDEEEKDRKL), 225 to 252 (SVPAAAAATTSAKGEGEQRTEEDEEDDD), 370 to 403 (PSSTSSSASPTADNQPQKPQSPESDESDSGSDSP), and 514 to 557 (SGGP…GRGN). The segment covering 131 to 140 (KLTKRGKEGA) has biased composition (basic and acidic residues). Residues 370 to 381 (PSSTSSSASPTA) are compositionally biased toward low complexity. Composition is skewed to gly residues over residues 517–527 (PRRGGGGGGKK) and 538–549 (GRGGGRGGGRGG).

It belongs to the SEN54 family. As to quaternary structure, tRNA splicing endonuclease is a heterotetramer composed of tsp-2/sen2, tsp-1/sen15, tsp-4/sen34 and tsp-5/sen54. Interacts directly with tsp-2/sen2.

Its function is as follows. Non-catalytic subunit of the tRNA-splicing endonuclease complex, a complex responsible for identification and cleavage of the splice sites in pre-tRNA. It cleaves pre-tRNA at the 5' and 3' splice sites to release the intron. The products are an intron and two tRNA half-molecules bearing 2',3' cyclic phosphate and 5'-OH termini. There are no conserved sequences at the splice sites, but the intron is invariably located at the same site in the gene, placing the splice sites an invariant distance from the constant structural features of the tRNA body. May be required to embody the molecular ruler of the complex. In Neurospora crassa (strain ATCC 24698 / 74-OR23-1A / CBS 708.71 / DSM 1257 / FGSC 987), this protein is Probable tRNA-splicing endonuclease subunit tsp-5 (tsp-5).